The primary structure comprises 612 residues: Protein hinderin (612 aa).

Position 20 is a phosphoserine (serine 20). Positions 90 to 166 form a coiled coil; the sequence is LKDLCLEDKR…CQELLSLYQK (77 aa). The residue at position 178 (serine 178) is a Phosphoserine. Positions 362–406 form a coiled coil; the sequence is IEKQLSEDRRQQLMLQKMELEIEKERLQHLLAQQETKLLLKQQQL. Residues 462-477 are compositionally biased toward polar residues; it reads STSFKKCPDSPNSGQN. 2 disordered regions span residues 462–484 and 509–598; these read STSF…KKTV and ETVT…RSPE. A phosphoserine mark is found at serine 471, serine 527, and serine 558. 2 stretches are compositionally biased toward polar residues: residues 555–568 and 575–585; these read QSLS…SQPH and TWSTLRPTPQK.

In terms of assembly, interacts (via N- and C-terminal domains) with SMC3 (via central hinge region).

Its function is as follows. Competes with SMC1 for binding to SMC3. May affect the availability of SMC3 to engage in the formation of multimeric protein complexes. The protein is Protein hinderin (Kiaa1328) of Mus musculus (Mouse).